Consider the following 83-residue polypeptide: uncharacterized protein (83 aa).

Belongs to the UPF0440 family.

This is an uncharacterized protein from Natronomonas pharaonis (strain ATCC 35678 / DSM 2160 / CIP 103997 / JCM 8858 / NBRC 14720 / NCIMB 2260 / Gabara) (Halobacterium pharaonis).